Here is a 435-residue protein sequence, read N- to C-terminus: Methylenetetrahydrofolate--tRNA-(uracil-5-)-methyltransferase TrmFO (435 aa).

9-14 (GGGLAG) contributes to the FAD binding site.

The protein belongs to the MnmG family. TrmFO subfamily. FAD serves as cofactor.

The protein localises to the cytoplasm. The enzyme catalyses uridine(54) in tRNA + (6R)-5,10-methylene-5,6,7,8-tetrahydrofolate + NADH + H(+) = 5-methyluridine(54) in tRNA + (6S)-5,6,7,8-tetrahydrofolate + NAD(+). It catalyses the reaction uridine(54) in tRNA + (6R)-5,10-methylene-5,6,7,8-tetrahydrofolate + NADPH + H(+) = 5-methyluridine(54) in tRNA + (6S)-5,6,7,8-tetrahydrofolate + NADP(+). Its function is as follows. Catalyzes the folate-dependent formation of 5-methyl-uridine at position 54 (M-5-U54) in all tRNAs. The sequence is that of Methylenetetrahydrofolate--tRNA-(uracil-5-)-methyltransferase TrmFO from Geobacter sp. (strain M21).